Reading from the N-terminus, the 221-residue chain is NEDD4 family-interacting protein 1 (221 aa).

A2 bears the N-acetylalanine mark. The tract at residues 2–41 (ALALAALAAVEPACGSGYQQLQNEEEPGEPEQTAGDAPPP) is interaction with UBE2L3. Residues 2–116 (ALALAALAAV…TDQLRIGNDG (115 aa)) are Cytoplasmic-facing. The disordered stretch occupies residues 18–44 (GYQQLQNEEEPGEPEQTAGDAPPPYSS). 3 consecutive short sequence motifs (PPxY motif) follow at residues 39-42 (PPPY), 64-67 (PPSY), and 74-76 (PSY). The interaction with ITCH stretch occupies residues 42–76 (YSSITAESAAYFDYKDESGFPKPPSYNVATTLPSY). Residues 117–137 (IFMLTFFMAFLFNWIGFFLSF) traverse the membrane as a helical segment. Over 138 to 143 (CLTTSA) the chain is Extracellular. Residues 144–164 (AGRYGAISGFGLSLIKWILIV) form a helical membrane-spanning segment. The Cytoplasmic portion of the chain corresponds to 165–172 (RFSTYFPG). The helical transmembrane segment at 173-193 (YFDGQYWLWWVFLVLGFLLFL) threads the bilayer. At 194–221 (RGFINYAKVRKMPETFSNLPRTRVLFIY) the chain is on the extracellular side.

As to quaternary structure, forms heterodimers with NDFIP2. Interacts with several E3 ubiquitin-protein ligases, including ITCH, NEDD4, NEDD4L and WWP2. The interaction with NEDD4, NEDD4L and ITCH leads to relocalization of these proteins to exosomes and eventually to exosomal secretion. Interacts with U2SURP. Interacts with SLC11A2/DMT1. Interacts with PTEN. May interact with phosphorylated EGFR. Interacts with BRAT1. Interacts with KCNH2. Interacts with MAVS. Part of a complex containing ITCH, NDFIP1 and MAP3K7. Interacts (via N-terminus) with UBE2L3; the interaction mediates recruitment of UBE2L3 to ITCH. Ubiquitinated by NEDD4; mono-, di- and polyubiquitinated forms are detected. Ubiquitination regulates its degradation. Post-translationally, undergoes transient tyrosine phosphorylation following EGF stimulation, most probably by catalyzed by SRC. Phosphorylation SRC is enhanced in the presence of NDFIP2 which may act as a scaffold to recruit SRC to NDFIP1. In terms of tissue distribution, highly expressed in embryonic and early postnatal cortex (at protein level). Widely expressed. Hardly detectable in resting T-cells; up-regulated in T-cells in response to activation.

The protein resides in the endosome membrane. It localises to the golgi apparatus membrane. Its subcellular location is the synapse. It is found in the synaptosome. The protein localises to the cell projection. The protein resides in the dendrite. It localises to the secreted. Functionally, activates HECT domain-containing E3 ubiquitin-protein ligases, including NEDD4 and ITCH, and consequently modulates the stability of their targets. As a result, controls many cellular processes. Prevents chronic T-helper cell-mediated inflammation by activating ITCH and thus controlling JUNB degradation. Promotes pancreatic beta cell death through degradation of JUNB and inhibition of the unfolded protein response, leading to reduction of insulin secretion. Restricts the production of pro-inflammatory cytokines in effector Th17 T-cells by promoting ITCH-mediated ubiquitination and degradation of RORC. Together with NDFIP2, limits the cytokine signaling and expansion of effector Th2 T-cells by promoting degradation of JAK1, probably by ITCH- and NEDD4L-mediated ubiquitination. Regulates peripheral T-cell tolerance to self and foreign antigens, forcing the exit of naive CD4+ T-cells from the cell cycle before they become effector T-cells. Negatively regulates RLR-mediated antiviral response by promoting SMURF1-mediated ubiquitination and subsequent degradation of MAVS. Negatively regulates KCNH2 potassium channel activity by decreasing its cell-surface expression and interfering with channel maturation through recruitment of NEDD4L to the Golgi apparatus where it mediates KCNH2 degradation. In cortical neurons, mediates the ubiquitination of the divalent metal transporter SLC11A2/DMT1 by NEDD4L, leading to its down-regulation and protection of the cells from cobalt and iron toxicity. Important for normal development of dendrites and dendritic spines in cortex. Enhances the ubiquitination of BRAT1 mediated by: NEDD4, NEDD4L and ITCH and is required for the nuclear localization of ubiquitinated BRAT1. Enhances the ITCH-mediated ubiquitination of MAP3K7 by recruiting E2 ubiquitin-conjugating enzyme UBE2L3 to ITCH. Modulates EGFR signaling through multiple pathways. In particular, may regulate the ratio of AKT1-to-MAPK8 signaling in response to EGF, acting on AKT1 probably through PTEN destabilization and on MAPK8 through ITCH-dependent MAP2K4 inactivation. As a result, may control cell growth rate. Inhibits cell proliferation by promoting PTEN nuclear localization and changing its signaling specificity. This Mus musculus (Mouse) protein is NEDD4 family-interacting protein 1 (Ndfip1).